The primary structure comprises 212 residues: Orotate phosphoribosyltransferase (212 aa).

Residues arginine 94, lysine 98, histidine 100, and glutamate 120–serine 128 contribute to the 5-phospho-alpha-D-ribose 1-diphosphate site. Serine 124 is a binding site for orotate.

Belongs to the purine/pyrimidine phosphoribosyltransferase family. PyrE subfamily. Homodimer. Requires Mg(2+) as cofactor.

It carries out the reaction orotidine 5'-phosphate + diphosphate = orotate + 5-phospho-alpha-D-ribose 1-diphosphate. It participates in pyrimidine metabolism; UMP biosynthesis via de novo pathway; UMP from orotate: step 1/2. Catalyzes the transfer of a ribosyl phosphate group from 5-phosphoribose 1-diphosphate to orotate, leading to the formation of orotidine monophosphate (OMP). The protein is Orotate phosphoribosyltransferase of Bacillus pumilus (strain SAFR-032).